Reading from the N-terminus, the 190-residue chain is Dynein axonemal light chain 1 (190 aa).

Ala-2 carries the N-acetylalanine modification. 4 LRR repeats span residues 49 to 70, 71 to 92, 94 to 115, and 116 to 137; these read NCEK…NGLK, NLRI…EAVG, TLEE…HVMK, and KLKI…VKLA. Ser-56 is subject to Phosphoserine. The LRRCT domain occupies 150-190; it reads NPLEEKHSAEGNWVEEATKRVPKLKKLDGTPVIKEDEEEDN.

Belongs to the dynein light chain LC1-type family. In terms of assembly, interacts with ZMYND10 (via C-terminus). Interacts with DNAH5, a outer arm dynein heavy chain. Interacts with tubulin located within the A-tubule of the outer doublets in a ATP-independent manner.

It is found in the cytoplasm. The protein resides in the cytoskeleton. It localises to the cilium axoneme. In terms of biological role, part of the multisubunit axonemal ATPase complexes that generate the force for cilia motility and govern beat frequency. Component of the outer arm dynein (ODA). May be involved in a mechanosensory feedback mechanism controlling ODA activity based on external conformational cues by tethering the outer arm dynein heavy chain (DNAH5) to the microtubule within the axoneme. Important for ciliary function in the airways and for the function of the cilia that produce the nodal flow essential for the determination of the left-right asymmetry. The sequence is that of Dynein axonemal light chain 1 (DNAL1) from Bos taurus (Bovine).